A 177-amino-acid polypeptide reads, in one-letter code: Thymidine kinase (177 aa).

11-18 (GPMFSGKS) contributes to the ATP binding site. Residue Glu83 is the Proton acceptor of the active site. Phe113 contributes to the substrate binding site. Cys138 and Cys141 together coordinate Zn(2+). Position 157–161 (157–161 (IEIIG)) interacts with substrate. Residues Cys170 and Cys173 each coordinate Zn(2+).

Belongs to the thymidine kinase family. Homotetramer. Two molecules of substrate bind to each enzyme tetramer.

It catalyses the reaction thymidine + ATP = dTMP + ADP + H(+). Functionally, phosphorylates thymidine and thymidine analogs, such as azidothymidine (AZT). Part of the salvage pathway for pyrimidine deoxyribonucleotide synthesis. This chain is Thymidine kinase (OPG101), found in Variola virus.